Consider the following 535-residue polypeptide: Dimethylaniline monooxygenase [N-oxide-forming] 2 (535 aa).

Ala-2 carries the N-acetylalanine modification. Residues 9-13 (GAGVS), Glu-32, 40-41 (LW), and 61-62 (NT) each bind FAD. Residues 60–61 (TN) and 195–198 (SAAD) contribute to the NADP(+) site. Lys-492 is covalently cross-linked (Glycyl lysine isopeptide (Lys-Gly) (interchain with G-Cter in SUMO)). Residues 510–530 (APVSFLLKILGLLAVVLAFFF) traverse the membrane as a helical segment.

This sequence belongs to the FMO family. FAD is required as a cofactor. Mg(2+) serves as cofactor.

Its subcellular location is the microsome membrane. The protein localises to the endoplasmic reticulum membrane. Functionally, catalyzes the oxidative metabolism of numerous xenobiotics, including mainly therapeutic drugs and insecticides that contain a soft nucleophile, most commonly nitrogen and sulfur and participates to their bioactivation. Catalyzes the S-oxygenation of the prodrug ethionamide (ETA) to the S-oxide (ETASO), the first step in its bioactivation following by the second oxygenation to the sulfinic acid but to a lesser extend. In Mus musculus (Mouse), this protein is Dimethylaniline monooxygenase [N-oxide-forming] 2.